The following is a 256-amino-acid chain: Aspirochlorine biosynthesis protein F (256 aa).

A glycan (N-linked (GlcNAc...) asparagine) is linked at N19. 3 consecutive transmembrane segments (helical) span residues 21-41 (SITP…GPHF), 163-183 (LVWV…FFFT), and 214-234 (FGLG…ILAV).

It localises to the membrane. It participates in mycotoxin biosynthesis. Part of the gene cluster that mediates the biosynthesis of aspirochlorine (or antibiotic A30641), an unusual halogenated spiro compound with distinctive antifungal properties due to selective inhibition of protein biosynthesis, and which is also active against bacteria, viruses, and murine tumor cells. The non-ribosomal peptide synthetase (NRPS) aclP is responsible the formation of the diketopiperazine (DKP) core from the condensation of 2 phenylalanine residues. One Phe residue is tailored into chlorotyrosine by hydroxylation and chlorination, whereas the second Phe undergoes an unprecedented C-C bond cleavage to be converted into glycine. After formation of the DKP, sulfur is incorporated into the DKP by conjugation with glutathione by aclG, followed by its stepwise degradation to the thiol by aclI, aclJ and aclK, and the dithiol oxidation by aclT. In addition, oxygenases (aclB, aclC, aclL and aclO) and O-methyltransferases (aclM and aclU) act as tailoring enzymes to produce the intermediate dechloroaspirochlorine. Ultimately, chlorination of dechloroaspirochlorine by the halogenase aclH is the last step in the aspirochlorine pathway. This chain is Aspirochlorine biosynthesis protein F, found in Aspergillus oryzae (strain ATCC 42149 / RIB 40) (Yellow koji mold).